The sequence spans 802 residues: Phenylalanine--tRNA ligase beta subunit (802 aa).

Positions A39–A150 constitute a tRNA-binding domain. The 76-residue stretch at G400–M475 folds into the B5 domain. The Mg(2+) site is built by D453, D459, E462, and E463. Residues S708–R801 form the FDX-ACB domain.

Belongs to the phenylalanyl-tRNA synthetase beta subunit family. Type 1 subfamily. As to quaternary structure, tetramer of two alpha and two beta subunits. The cofactor is Mg(2+).

The protein localises to the cytoplasm. The catalysed reaction is tRNA(Phe) + L-phenylalanine + ATP = L-phenylalanyl-tRNA(Phe) + AMP + diphosphate + H(+). This Bradyrhizobium diazoefficiens (strain JCM 10833 / BCRC 13528 / IAM 13628 / NBRC 14792 / USDA 110) protein is Phenylalanine--tRNA ligase beta subunit.